Here is a 37-residue protein sequence, read N- to C-terminus: Lambda-hexatoxin-Hf1a (37 aa).

Intrachain disulfides connect C4–C18, C11–C23, C14–C15, and C17–C34.

The protein belongs to the neurotoxin 11 (kappa toxin) family. As to expression, expressed by the venom gland.

It localises to the secreted. In terms of biological role, this excitatory toxin inhibits insect calcium-activated potassium (KCa) channels (Slo-type). In Hadronyche formidabilis (Northern tree funnel-web spider), this protein is Lambda-hexatoxin-Hf1a.